A 338-amino-acid chain; its full sequence is Ketol-acid reductoisomerase (NADP(+)) (338 aa).

In terms of domain architecture, KARI N-terminal Rossmann spans 1–181 (MKVYYDKDCD…GGGRTGIIET (181 aa)). NADP(+)-binding positions include 24 to 27 (YGSQ), arginine 47, serine 50, threonine 52, and 82 to 85 (DEFQ). Residue histidine 107 is part of the active site. Position 133 (glycine 133) interacts with NADP(+). A KARI C-terminal knotted domain is found at 182–327 (TFKDETETDL…EQLRAMMPWI (146 aa)). Positions 190, 194, 226, and 230 each coordinate Mg(2+). Serine 251 serves as a coordination point for substrate.

This sequence belongs to the ketol-acid reductoisomerase family. The cofactor is Mg(2+).

The enzyme catalyses (2R)-2,3-dihydroxy-3-methylbutanoate + NADP(+) = (2S)-2-acetolactate + NADPH + H(+). The catalysed reaction is (2R,3R)-2,3-dihydroxy-3-methylpentanoate + NADP(+) = (S)-2-ethyl-2-hydroxy-3-oxobutanoate + NADPH + H(+). Its pathway is amino-acid biosynthesis; L-isoleucine biosynthesis; L-isoleucine from 2-oxobutanoate: step 2/4. It functions in the pathway amino-acid biosynthesis; L-valine biosynthesis; L-valine from pyruvate: step 2/4. In terms of biological role, involved in the biosynthesis of branched-chain amino acids (BCAA). Catalyzes an alkyl-migration followed by a ketol-acid reduction of (S)-2-acetolactate (S2AL) to yield (R)-2,3-dihydroxy-isovalerate. In the isomerase reaction, S2AL is rearranged via a Mg-dependent methyl migration to produce 3-hydroxy-3-methyl-2-ketobutyrate (HMKB). In the reductase reaction, this 2-ketoacid undergoes a metal-dependent reduction by NADPH to yield (R)-2,3-dihydroxy-isovalerate. The protein is Ketol-acid reductoisomerase (NADP(+)) of Ectopseudomonas mendocina (strain ymp) (Pseudomonas mendocina).